Here is a 201-residue protein sequence, read N- to C-terminus: UPF0301 protein Atu0781 (201 aa).

It belongs to the UPF0301 (AlgH) family.

In Agrobacterium fabrum (strain C58 / ATCC 33970) (Agrobacterium tumefaciens (strain C58)), this protein is UPF0301 protein Atu0781.